Consider the following 839-residue polypeptide: A disintegrin and metalloproteinase with thrombospondin motifs 4 (839 aa).

The first 51 residues, 1–51 (MSHMDSHPGRGLADGWLWGIQPRLLLPTVPVSGSRLVWLLLLASLLPSAWP), serve as a signal peptide directing secretion. Residues 52–212 (ASPLPREEEI…PSPSPRRAKR (161 aa)) constitute a propeptide that is removed on maturation. The N-linked (GlcNAc...) asparagine glycan is linked to N68. The tract at residues 166-209 (EGGAPNSAGGPGAHILRRKSPVSGQGPMCNVKAPPGKPSPSPRR) is disordered. The Cysteine switch motif lies at 192 to 199 (PMCNVKAP). Residue C194 participates in Zn(2+) binding. A Peptidase M12B domain is found at 218 to 428 (RFVETLVVAD…GFGHCLLDKP (211 aa)). Cystine bridges form between C293/C345, C322/C327, C339/C423, C377/C407, C449/C472, C460/C482, C467/C501, C495/C506, C532/C569, C536/C574, and C547/C559. H361 is a binding site for Zn(2+). E362 is a catalytic residue. Zn(2+) contacts are provided by H365 and H371. Positions 437-519 (TFPGKDYDAD…DQLQAFNVPQ (83 aa)) constitute a Disintegrin domain. The TSP type-1 domain maps to 520–575 (AGGWGPWGSWGDCSRSCGGGVQFSSRDCTRPVPRNGGKYCEGRRTRFRSCNTQDCP). Residues 686–839 (SKQSGSFKKF…LRRRSWAGRK (154 aa)) form a spacer region.

As to quaternary structure, interacts with SRPX2. Zn(2+) is required as a cofactor. In terms of processing, the precursor is cleaved by a furin endopeptidase. Post-translationally, glycosylated. Can be O-fucosylated by POFUT2 on a serine or a threonine residue found within the consensus sequence C1-X(2)-(S/T)-C2-G of the TSP type-1 repeat domains where C1 and C2 are the first and second cysteine residue of the repeat, respectively. Fucosylated repeats can then be further glycosylated by the addition of a beta-1,3-glucose residue by the glucosyltransferase, B3GALTL. Fucosylation mediates the efficient secretion of ADAMTS family members. Can also be C-glycosylated with one or two mannose molecules on tryptophan residues within the consensus sequence W-X-X-W of the TPRs, and N-glycosylated. These other glycosylations can also facilitate secretion.

It localises to the secreted. The protein resides in the extracellular space. It is found in the extracellular matrix. It carries out the reaction Glutamyl endopeptidase. Bonds cleaved include 370-Thr-Glu-Gly-Glu-|-Ala-Arg-Gly-Ser-377 in the interglobular domain of mammalian aggrecan.. Cleaves aggrecan, a cartilage proteoglycan, at the '392-Glu-|-Ala-393' site and may be involved in its turnover. Also cleaves COMP. May play an important role in the destruction of aggrecan in arthritic diseases. The sequence is that of A disintegrin and metalloproteinase with thrombospondin motifs 4 (ADAMTS4) from Bos taurus (Bovine).